A 131-amino-acid chain; its full sequence is Small ribosomal subunit protein uS8 (131 aa).

It belongs to the universal ribosomal protein uS8 family. As to quaternary structure, part of the 30S ribosomal subunit. Contacts proteins S5 and S12.

Functionally, one of the primary rRNA binding proteins, it binds directly to 16S rRNA central domain where it helps coordinate assembly of the platform of the 30S subunit. The protein is Small ribosomal subunit protein uS8 of Legionella pneumophila subsp. pneumophila (strain Philadelphia 1 / ATCC 33152 / DSM 7513).